A 135-amino-acid polypeptide reads, in one-letter code: ATP synthase epsilon chain (135 aa).

This sequence belongs to the ATPase epsilon chain family. F-type ATPases have 2 components, CF(1) - the catalytic core - and CF(0) - the membrane proton channel. CF(1) has five subunits: alpha(3), beta(3), gamma(1), delta(1), epsilon(1). CF(0) has three main subunits: a, b and c.

The protein localises to the cell inner membrane. In terms of biological role, produces ATP from ADP in the presence of a proton gradient across the membrane. This chain is ATP synthase epsilon chain, found in Rhizobium rhizogenes (strain K84 / ATCC BAA-868) (Agrobacterium radiobacter).